A 552-amino-acid polypeptide reads, in one-letter code: (R)-mandelonitrile lyase-like (552 aa).

The N-terminal stretch at 1-28 (MTKRIDSSLLYTALVVLLLLGVVHRSNA) is a signal peptide. N-linked (GlcNAc...) asparagine glycosylation occurs at Asn44. Position 55-82 (55-82 (DYIIVGGGTAGCPLAATLSQSFRVLLLE)) interacts with FAD. Residues Asn162, Asn259, and Asn434 are each glycosylated (N-linked (GlcNAc...) asparagine). His492 serves as the catalytic Proton acceptor.

Belongs to the GMC oxidoreductase family. As to quaternary structure, monomer. Requires FAD as cofactor. In terms of processing, glycosylated.

It carries out the reaction (R)-mandelonitrile = benzaldehyde + hydrogen cyanide. This chain is (R)-mandelonitrile lyase-like, found in Arabidopsis thaliana (Mouse-ear cress).